The following is a 375-amino-acid chain: uncharacterized protein (375 aa).

Over 1 to 2 (MR) the chain is Cytoplasmic. Residues 3–23 (WYSYVIPAVILSIIAISGVWW) traverse the membrane as a helical; Signal-anchor for type II membrane protein segment. The Lumenal portion of the chain corresponds to 24–375 (NATLGTRLDQ…YIEQRLFPQP (352 aa)).

Belongs to the glycosyltransferase 34 family.

Its subcellular location is the endoplasmic reticulum membrane. It is found in the golgi apparatus membrane. This is an uncharacterized protein from Schizosaccharomyces pombe (strain 972 / ATCC 24843) (Fission yeast).